An 81-amino-acid polypeptide reads, in one-letter code: Protein RADIALIS-like 3 (81 aa).

The 56-residue stretch at 7–62 (SSSASWTRKENKLFERALATYDQDTPDRWHNVARAVGGKSAEEVRRHYELLIRDVN) folds into the SANT domain.

As to expression, expressed just outside the vascular bundles in the rosette stem and the leaf traces. Not detected in floral primordia.

It is found in the nucleus. Functionally, probable transcription factor. This Arabidopsis thaliana (Mouse-ear cress) protein is Protein RADIALIS-like 3 (RL3).